We begin with the raw amino-acid sequence, 102 residues long: Large ribosomal subunit protein bL21 (102 aa).

This sequence belongs to the bacterial ribosomal protein bL21 family. As to quaternary structure, part of the 50S ribosomal subunit. Contacts protein L20.

Its function is as follows. This protein binds to 23S rRNA in the presence of protein L20. The protein is Large ribosomal subunit protein bL21 of Phytoplasma australiense.